The following is a 420-amino-acid chain: ATP phosphoribosyltransferase regulatory subunit (420 aa).

This sequence belongs to the class-II aminoacyl-tRNA synthetase family. HisZ subfamily. Heteromultimer composed of HisG and HisZ subunits.

The protein resides in the cytoplasm. The protein operates within amino-acid biosynthesis; L-histidine biosynthesis; L-histidine from 5-phospho-alpha-D-ribose 1-diphosphate: step 1/9. Functionally, required for the first step of histidine biosynthesis. May allow the feedback regulation of ATP phosphoribosyltransferase activity by histidine. This Bacillus thuringiensis subsp. konkukian (strain 97-27) protein is ATP phosphoribosyltransferase regulatory subunit.